Consider the following 87-residue polypeptide: Tan_10cys (87 aa).

The N-terminal stretch at 1–21 (MNLKVLFLLAMVLVTLCLGED) is a signal peptide. A propeptide spanning residues 22–27 (RVTDRR) is cleaved from the precursor.

Belongs to the teretoxin C (TC) superfamily. In terms of processing, contains 5 disulfide bonds. Expressed by the venom duct.

The protein localises to the secreted. This is Tan_10cys from Terebra anilis (Auger snail).